Reading from the N-terminus, the 631-residue chain is MASPEGTDDEGGGCTGWFHVEAVVKKRTGDIISEDETEEDEGTASDLDGFLDNSNVITTQADRETAQQLLHAQNTYADTQTLHNLKRKYLGSPLGDISNQQFVCREGVKRRIIDTDVADSGYGNTLEVEATQQVQDNTYGSGKQQDGGSQTSVCSRENSIEADSDMDIGATPPQQIQELLKSSNVQAKLCYKFKELFGIPFSELVRTFKSDSTCCHDWICAMFGVNETLAEALKTIIKSQCMYYHIQCLTCTWGVVILMLIRYTCGKNRKTIIKSLSSIVNVPSEQMLVQPPKIRSPAVALYFYKTAMSNISDIYGETPEWIQRQTQIQHSFQDCQFELSKMVQWAFDNDVTDDSDIAFYYAQLADVDSNAQAFLKSNMQAKYVKDCGIMCRHYKRAQQQQMNMKQWITHICSKVDEGGDWRPIVQFLRYQGVDFISFLSYFKLFLRGTPKHNCLVLYGPPNTGKSCFAMSLIQFFQGSVISYVNSHSHFWLQPLDNAKLGMLDDATDACWRYIDEYMRNLLDGNPVSLDRKHKQLVQIKCPPVIITTNINPLHDAKLQYLHSRIHVVPFLNPFPIDTNGNPVYQLNNVNWKCFFERTWSRLDLNNDEDKENHGDSMPTFRCVPGENSRLF.

Residues 28-48 (TGDIISEDETEEDEGTASDLD) form a disordered region. Over residues 32–43 (ISEDETEEDEGT) the composition is skewed to acidic residues. A Nuclear localization signal motif is present at residues 86 to 88 (KRK). S92 is modified (phosphoserine; by host). The segment at 168 to 334 (IGATPPQQIQ…QTQIQHSFQD (167 aa)) is DNA-binding region. Positions 433–583 (VDFISFLSYF…FPIDTNGNPV (151 aa)) constitute an SF3 helicase domain. 459 to 466 (GPPNTGKS) is a binding site for ATP. K540 is covalently cross-linked (Glycyl lysine isopeptide (Lys-Gly) (interchain with G-Cter in SUMO)).

Belongs to the papillomaviridae E1 protein family. As to quaternary structure, can form hexamers. Interacts with E2 protein; this interaction increases E1 DNA binding specificity. Interacts with host DNA polymerase subunit POLA2. Interacts with host single stranded DNA-binding protein RPA1. Interacts with host TOP1; this interaction stimulates the enzymatic activity of TOP1. In terms of processing, phosphorylated. Post-translationally, sumoylated.

The protein resides in the host nucleus. It catalyses the reaction Couples ATP hydrolysis with the unwinding of duplex DNA by translocating in the 3'-5' direction.. It carries out the reaction ATP + H2O = ADP + phosphate + H(+). In terms of biological role, ATP-dependent DNA 3'-5' helicase required for initiation of viral DNA replication. It forms a complex with the viral E2 protein. The E1-E2 complex binds to the replication origin which contains binding sites for both proteins. During the initial step, a dimer of E1 interacts with a dimer of protein E2 leading to a complex that binds the viral origin of replication with high specificity. Then, a second dimer of E1 displaces the E2 dimer in an ATP-dependent manner to form the E1 tetramer. Following this, two E1 monomers are added to each half of the site, which results in the formation of two E1 trimers on the viral ori. Subsequently, two hexamers will be created. The double hexamer acts as a bi-directional helicase machinery and unwinds the viral DNA and then recruits the host DNA polymerase to start replication. This Homo sapiens (Human) protein is Replication protein E1.